Here is a 30-residue protein sequence, read N- to C-terminus: Agglutinin alpha-1 chain (30 aa).

Residues 1-30 (GVAFDDGSYTGIREINFEYNRETAIGGXQV) form the Jacalin-type lectin domain.

Belongs to the jacalin lectin family. In terms of assembly, tetramer of four alpha chains associated with two or four beta chains.

N-acetyl-galactosamine and D-galactose specific lectin. Binds the Tn-antigen structure GalNAc-alpha-1-O-Ser, the T-antigen structure Gal-beta1-3-GalNAc and IgA. This Morus nigra (Black mulberry) protein is Agglutinin alpha-1 chain.